The primary structure comprises 241 residues: Ribonuclease PH (241 aa).

Residues Arg89 and 127–129 (GTR) contribute to the phosphate site.

It belongs to the RNase PH family. Homohexameric ring arranged as a trimer of dimers.

The catalysed reaction is tRNA(n+1) + phosphate = tRNA(n) + a ribonucleoside 5'-diphosphate. Functionally, phosphorolytic 3'-5' exoribonuclease that plays an important role in tRNA 3'-end maturation. Removes nucleotide residues following the 3'-CCA terminus of tRNAs; can also add nucleotides to the ends of RNA molecules by using nucleoside diphosphates as substrates, but this may not be physiologically important. Probably plays a role in initiation of 16S rRNA degradation (leading to ribosome degradation) during starvation. The polypeptide is Ribonuclease PH (Xanthomonas axonopodis pv. citri (strain 306)).